Consider the following 827-residue polypeptide: Spastin (827 aa).

Polar residues predominate over residues 1-13; that stretch reads MVRNKYTLTTAGK. Residues 1 to 58 form a disordered region; the sequence is MVRNKYTLTTAGKSPSKKSRTGSLSKQHDATGDDDGETGTLDGSGSAAGSPVGGGTDA. The Cytoplasmic portion of the chain corresponds to 1–79; that stretch reads MVRNKYTLTT…KQNLYIISFP (79 aa). Residues 38-50 are compositionally biased toward low complexity; it reads TGTLDGSGSAAGS. Positions 80-100 form an intramembrane region, helical; sequence VIFVFNVLRSLLYQLFIVFRY. Residues 101–827 are Cytoplasmic-facing; it reads VYNFTTKVVY…WLQDFGDVTL (727 aa). Disordered regions lie at residues 127–190 and 207–229; these read QHGH…AHPL and SIQR…KQKH. Basic residues predominate over residues 129–141; that stretch reads GHHHHHHHRHSSH. The span at 142–190 shows a compositional bias: low complexity; that stretch reads SIHSTAAAHQLQQHQQQQQHQYSLLQQEQHGVTEPQQQQQQQHQAAHPL. The region spanning 231–306 is the MIT domain; it reads HRRAFEYISK…SMARDRLQFL (76 aa). Disordered regions lie at residues 358–381, 398–433, and 476–526; these read HHPA…ATPS, VGYK…GGAG, and VSIP…PQIS. Positions 364 to 381 are enriched in low complexity; it reads TAASSRPTTAATAPATPS. 2 stretches are compositionally biased toward low complexity: residues 476–486 and 510–524; these read VSIPIPGSSPV and QQPQ…QQPQ. ATP is bound at residue 592–599; it reads GPPGNGKT.

Belongs to the AAA ATPase family. Spastin subfamily. Homohexamer. The homohexamer is stabilized by ATP-binding. The homohexamer may adopt a ring conformation through which microtubules pass prior to being severed. Interacts with microtubules.

The protein localises to the membrane. It localises to the cytoplasm. It is found in the cytoskeleton. Its subcellular location is the microtubule organizing center. The protein resides in the centrosome. The catalysed reaction is n ATP + n H2O + a microtubule = n ADP + n phosphate + (n+1) alpha/beta tubulin heterodimers.. ATP-dependent microtubule severing protein. Microtubule severing may promote reorganization of cellular microtubule arrays and the release of microtubules from the microtubule organizing center following nucleation. This is Spastin (spas) from Anopheles gambiae (African malaria mosquito).